Reading from the N-terminus, the 348-residue chain is UDP-3-O-acylglucosamine N-acyltransferase (348 aa).

Histidine 248 acts as the Proton acceptor in catalysis.

The protein belongs to the transferase hexapeptide repeat family. LpxD subfamily. In terms of assembly, homotrimer.

It carries out the reaction a UDP-3-O-[(3R)-3-hydroxyacyl]-alpha-D-glucosamine + a (3R)-hydroxyacyl-[ACP] = a UDP-2-N,3-O-bis[(3R)-3-hydroxyacyl]-alpha-D-glucosamine + holo-[ACP] + H(+). It functions in the pathway bacterial outer membrane biogenesis; LPS lipid A biosynthesis. Catalyzes the N-acylation of UDP-3-O-acylglucosamine using 3-hydroxyacyl-ACP as the acyl donor. Is involved in the biosynthesis of lipid A, a phosphorylated glycolipid that anchors the lipopolysaccharide to the outer membrane of the cell. The chain is UDP-3-O-acylglucosamine N-acyltransferase from Rippkaea orientalis (strain PCC 8801 / RF-1) (Cyanothece sp. (strain PCC 8801)).